The sequence spans 160 residues: Transcriptional repressor NrdR (160 aa).

A zinc finger spans residues 3–34 (CPACNYNGTKVLDSRPVQDFGSIRRRRECESC). The region spanning 49-139 (LIIVKKDGTR…VYKQFKDINV (91 aa)) is the ATP-cone domain.

This sequence belongs to the NrdR family. Requires Zn(2+) as cofactor.

Negatively regulates transcription of bacterial ribonucleotide reductase nrd genes and operons by binding to NrdR-boxes. This is Transcriptional repressor NrdR from Exiguobacterium sibiricum (strain DSM 17290 / CCUG 55495 / CIP 109462 / JCM 13490 / 255-15).